A 314-amino-acid polypeptide reads, in one-letter code: Mevalonate kinase (314 aa).

103–109 (GLGTSAA) serves as a coordination point for ATP. D150 serves as the catalytic Proton acceptor.

This sequence belongs to the GHMP kinase family. Mevalonate kinase subfamily. In terms of assembly, homodimer. Mg(2+) is required as a cofactor.

It is found in the cytoplasm. It carries out the reaction (R)-mevalonate + ATP = (R)-5-phosphomevalonate + ADP + H(+). Its pathway is isoprenoid biosynthesis; isopentenyl diphosphate biosynthesis via mevalonate pathway; isopentenyl diphosphate from (R)-mevalonate: step 1/3. In terms of biological role, catalyzes the phosphorylation of (R)-mevalonate (MVA) to (R)-mevalonate 5-phosphate (MVAP). Functions in the mevalonate (MVA) pathway leading to isopentenyl diphosphate (IPP), a key precursor for the biosynthesis of isoprenoid compounds such as archaeal membrane lipids. The sequence is that of Mevalonate kinase from Saccharolobus solfataricus (strain ATCC 35092 / DSM 1617 / JCM 11322 / P2) (Sulfolobus solfataricus).